The primary structure comprises 154 residues: MPYRSTEVLSPGPGERAPLHRLTLTHEQRHLRRKLLHLENDDVVMLDLKEPVMLADGDLLVLEGGGHIEVKAAAEALYDIRARNPLHLMELAWHLGNRHLPAAVEEGRILIARDPVIRAMLEGLGATVDEVNEPFHPLHGAYHQHGHGDHYRHG.

Belongs to the UreE family.

It is found in the cytoplasm. Its function is as follows. Involved in urease metallocenter assembly. Binds nickel. Probably functions as a nickel donor during metallocenter assembly. The chain is Urease accessory protein UreE from Rhizobium meliloti (strain 1021) (Ensifer meliloti).